The primary structure comprises 313 residues: Transcription initiation factor IIB 2 (313 aa).

The TFIIB-type zinc-finger motif lies at 13–44; the sequence is APKRCPECHSEHLIRDYEHGELICADCGAVIE. Residues cysteine 17, cysteine 20, cysteine 36, and cysteine 39 each coordinate Zn(2+). 2 repeat units span residues 130 to 213 and 224 to 305.

Belongs to the TFIIB family.

Functionally, stabilizes TBP binding to an archaeal box-A promoter. Also responsible for recruiting RNA polymerase II to the pre-initiation complex (DNA-TBP-TFIIB). This chain is Transcription initiation factor IIB 2, found in Thermoplasma volcanium (strain ATCC 51530 / DSM 4299 / JCM 9571 / NBRC 15438 / GSS1).